The primary structure comprises 253 residues: 5'/3'-nucleotidase SurE (253 aa).

4 residues coordinate a divalent metal cation: Asp8, Asp9, Ser39, and Asn92.

It belongs to the SurE nucleotidase family. It depends on a divalent metal cation as a cofactor.

It localises to the cytoplasm. It carries out the reaction a ribonucleoside 5'-phosphate + H2O = a ribonucleoside + phosphate. The catalysed reaction is a ribonucleoside 3'-phosphate + H2O = a ribonucleoside + phosphate. The enzyme catalyses [phosphate](n) + H2O = [phosphate](n-1) + phosphate + H(+). Functionally, nucleotidase with a broad substrate specificity as it can dephosphorylate various ribo- and deoxyribonucleoside 5'-monophosphates and ribonucleoside 3'-monophosphates with highest affinity to 3'-AMP. Also hydrolyzes polyphosphate (exopolyphosphatase activity) with the preference for short-chain-length substrates (P20-25). Might be involved in the regulation of dNTP and NTP pools, and in the turnover of 3'-mononucleotides produced by numerous intracellular RNases (T1, T2, and F) during the degradation of various RNAs. The sequence is that of 5'/3'-nucleotidase SurE from Escherichia coli O127:H6 (strain E2348/69 / EPEC).